The chain runs to 180 residues: ATP synthase subunit b, chloroplastic (180 aa).

A helical transmembrane segment spans residues 28 to 48 (VTTLINIGVVLCLLIIFGKGF).

The protein belongs to the ATPase B chain family. F-type ATPases have 2 components, F(1) - the catalytic core - and F(0) - the membrane proton channel. F(1) has five subunits: alpha(3), beta(3), gamma(1), delta(1), epsilon(1). F(0) has four main subunits: a(1), b(1), b'(1) and c(10-14). The alpha and beta chains form an alternating ring which encloses part of the gamma chain. F(1) is attached to F(0) by a central stalk formed by the gamma and epsilon chains, while a peripheral stalk is formed by the delta, b and b' chains.

Its subcellular location is the plastid. The protein resides in the chloroplast thylakoid membrane. In terms of biological role, f(1)F(0) ATP synthase produces ATP from ADP in the presence of a proton or sodium gradient. F-type ATPases consist of two structural domains, F(1) containing the extramembraneous catalytic core and F(0) containing the membrane proton channel, linked together by a central stalk and a peripheral stalk. During catalysis, ATP synthesis in the catalytic domain of F(1) is coupled via a rotary mechanism of the central stalk subunits to proton translocation. Functionally, component of the F(0) channel, it forms part of the peripheral stalk, linking F(1) to F(0). The protein is ATP synthase subunit b, chloroplastic of Cuscuta obtusiflora (Peruvian dodder).